A 248-amino-acid polypeptide reads, in one-letter code: Adenosylcobinamide-GDP ribazoletransferase (248 aa).

The next 8 helical transmembrane spans lie at glutamate 24 to tryptophan 44, leucine 47 to phenylalanine 67, isoleucine 70 to serine 90, valine 106 to leucine 126, isoleucine 134 to alanine 154, leucine 165 to leucine 185, phenylalanine 186 to phenylalanine 206, and alanine 228 to isoleucine 248.

The protein belongs to the CobS family. Mg(2+) is required as a cofactor.

It localises to the cell membrane. It carries out the reaction alpha-ribazole + adenosylcob(III)inamide-GDP = adenosylcob(III)alamin + GMP + H(+). It catalyses the reaction alpha-ribazole 5'-phosphate + adenosylcob(III)inamide-GDP = adenosylcob(III)alamin 5'-phosphate + GMP + H(+). Its pathway is cofactor biosynthesis; adenosylcobalamin biosynthesis; adenosylcobalamin from cob(II)yrinate a,c-diamide: step 7/7. Joins adenosylcobinamide-GDP and alpha-ribazole to generate adenosylcobalamin (Ado-cobalamin). Also synthesizes adenosylcobalamin 5'-phosphate from adenosylcobinamide-GDP and alpha-ribazole 5'-phosphate. The polypeptide is Adenosylcobinamide-GDP ribazoletransferase (Listeria welshimeri serovar 6b (strain ATCC 35897 / DSM 20650 / CCUG 15529 / CIP 8149 / NCTC 11857 / SLCC 5334 / V8)).